Consider the following 98-residue polypeptide: Small ribosomal subunit protein eS24 (98 aa).

Belongs to the eukaryotic ribosomal protein eS24 family.

This is Small ribosomal subunit protein eS24 from Thermococcus gammatolerans (strain DSM 15229 / JCM 11827 / EJ3).